Here is a 198-residue protein sequence, read N- to C-terminus: MKFNATLRSVQGTSASRRLRRAGRVPAIVYGGTAAPLNIELDHNEIFHALRKEQFHASILTMALEGGANEQVLLRSVQWHPFKQQVLHVDFQRVDANQALHTKVPLHFVNAETSPAVKLSGAIISHVVTEVEVTCLPQSLPQFIEVDLGNLLGGGSIHQKDIVLPKGVTFTHPNDEQVIVSAVVKGGAADDAEEAPAA.

This sequence belongs to the bacterial ribosomal protein bL25 family. CTC subfamily. In terms of assembly, part of the 50S ribosomal subunit; part of the 5S rRNA/L5/L18/L25 subcomplex. Contacts the 5S rRNA. Binds to the 5S rRNA independently of L5 and L18.

This is one of the proteins that binds to the 5S RNA in the ribosome where it forms part of the central protuberance. This chain is Large ribosomal subunit protein bL25, found in Bordetella avium (strain 197N).